A 105-amino-acid chain; its full sequence is Vacuolar ATPase assembly integral membrane protein VMA21 homolog (105 aa).

A disordered region spans residues 1-26; it reads MSTKNKKAAGGNGVAPKQTRQQSHDS. Residues 1–36 lie on the Cytoplasmic side of the membrane; sequence MSTKNKKAAGGNGVAPKQTRQQSHDSQDYSSFKTVL. Residues 37–57 form a helical membrane-spanning segment; the sequence is FYCMLIVFLPVLTFFVLKGFV. Residues 58–68 lie on the Lumenal side of the membrane; sequence LDQFLDISEVK. A helical transmembrane segment spans residues 69-89; the sequence is VNIASAVGAVVALHIALGLYI. At 90–105 the chain is on the cytoplasmic side; the sequence is YRAYFGAPGSKGSKTD.

Belongs to the VMA21 family.

The protein resides in the endoplasmic reticulum membrane. It localises to the endoplasmic reticulum-Golgi intermediate compartment membrane. The protein localises to the cytoplasmic vesicle. It is found in the COPII-coated vesicle membrane. Its function is as follows. Required for the assembly of the V0 complex of the vacuolar ATPase (V-ATPase) in the endoplasmic reticulum. The polypeptide is Vacuolar ATPase assembly integral membrane protein VMA21 homolog (Drosophila melanogaster (Fruit fly)).